Here is a 220-residue protein sequence, read N- to C-terminus: NAD(P)H-quinone oxidoreductase subunit M, chloroplastic (220 aa).

The transit peptide at 1–37 (MATTASPFLSPAKLSLERRLPRATWTARRSVRFPPVR) directs the protein to the chloroplast. The segment at 20 to 91 (LPRATWTARR…PVQPLAESKN (72 aa)) is disordered. Over residues 34–44 (PPVRAQDQQQQ) the composition is skewed to low complexity.

This sequence belongs to the NDH complex subunit M family. In terms of assembly, part of the chloroplast NDH complex, composed of a mixture of chloroplast and nucleus encoded subunits. Component of the NDH subcomplex A, at least composed of ndhH, ndhI, ndhJ, ndhK, ndhL, ndhM, ndhN and ndhO.

It localises to the plastid. Its subcellular location is the chloroplast thylakoid membrane. It catalyses the reaction a plastoquinone + NADH + (n+1) H(+)(in) = a plastoquinol + NAD(+) + n H(+)(out). The enzyme catalyses a plastoquinone + NADPH + (n+1) H(+)(in) = a plastoquinol + NADP(+) + n H(+)(out). NDH shuttles electrons from NAD(P)H:plastoquinone, via FMN and iron-sulfur (Fe-S) centers, to quinones in the photosynthetic chain and possibly in a chloroplast respiratory chain. The immediate electron acceptor for the enzyme in this species is believed to be plastoquinone. Couples the redox reaction to proton translocation, and thus conserves the redox energy in a proton gradient. The polypeptide is NAD(P)H-quinone oxidoreductase subunit M, chloroplastic (Oryza sativa subsp. indica (Rice)).